The sequence spans 315 residues: Ankyrin repeat domain-containing protein SOWAHD (315 aa).

The segment at 1–39 (MAQLGGAANRAPTASLAPTSQSLRCAPQPRPSRADTGSL) is disordered. ANK repeat units follow at residues 112–141 (PREH…ELLL), 147–162 (TGYS…GRHE), and 186–216 (GGLT…DATR).

The protein belongs to the SOWAH family.

The chain is Ankyrin repeat domain-containing protein SOWAHD (SOWAHD) from Homo sapiens (Human).